Consider the following 224-residue polypeptide: Response regulator protein GraR (224 aa).

Residues 2 to 115 (QILLVEDDNT…VLIAKLQAIY (114 aa)) form the Response regulatory domain. Asp-51 is modified (4-aspartylphosphate). A DNA-binding region (ompR/PhoB-type) is located at residues 126 to 224 (KRTLTWQDAV…KVGKGYMAHE (99 aa)). Phosphothreonine occurs at positions 128, 130, and 149.

As to quaternary structure, interacts with GraX. In terms of processing, phosphorylated by GraS. Phosphorylated by Stk1; phosphorylation increases the DNA-binding activity of GraR.

The protein resides in the cytoplasm. Functionally, member of the two-component regulatory system GraR/GraS involved in resistance against cationic antimicrobial peptides (CAMPs). Upon phosphorylation by GraS, functions as a transcription regulator by direct binding to promoter regions of target genes such as adhesins, exoproteins, transporters, toxins, and proteins involved in cell wall synthesis. Down-regulates the expression of many genes involved in RNA and amino acid synthesis or glycolysis. The sequence is that of Response regulator protein GraR (graR) from Staphylococcus aureus (strain USA300).